The chain runs to 1074 residues: Carbamoyl phosphate synthase large chain (1074 aa).

Positions 1 to 399 (MPKRSDIKKV…ALMKAIRSLD (399 aa)) are carboxyphosphate synthetic domain. 12 residues coordinate ATP: arginine 129, arginine 169, glycine 175, glycine 176, glutamate 208, valine 210, glutamate 215, glycine 241, isoleucine 242, histidine 243, glutamine 284, and glutamate 296. An ATP-grasp 1 domain is found at 133 to 325 (KKAMERIGEP…IARVTAKIAI (193 aa)). Residues glutamine 284, glutamate 296, and asparagine 298 each contribute to the Mg(2+) site. 3 residues coordinate Mn(2+): glutamine 284, glutamate 296, and asparagine 298. An oligomerization domain region spans residues 400 to 543 (IDIDLGYNGK…YSTYDEECEL (144 aa)). The tract at residues 544–933 (NPSDNKKVLI…FKAEMSAENN (390 aa)) is carbamoyl phosphate synthetic domain. One can recognise an ATP-grasp 2 domain in the interval 674-865 (NKLLNKLGIP…LAKIAAKVMA (192 aa)). ATP contacts are provided by arginine 710, aspartate 749, leucine 751, glutamate 756, glycine 781, isoleucine 782, histidine 783, serine 784, glutamine 824, and glutamate 836. Mg(2+)-binding residues include glutamine 824, glutamate 836, and asparagine 838. Positions 824, 836, and 838 each coordinate Mn(2+). The MGS-like domain occupies 932-1074 (NNLPLDGIVF…YHREVRYRAL (143 aa)). Residues 934–1074 (LPLDGIVFIS…YHREVRYRAL (141 aa)) form an allosteric domain region.

The protein belongs to the CarB family. As to quaternary structure, composed of two chains; the small (or glutamine) chain promotes the hydrolysis of glutamine to ammonia, which is used by the large (or ammonia) chain to synthesize carbamoyl phosphate. Tetramer of heterodimers (alpha,beta)4. It depends on Mg(2+) as a cofactor. Mn(2+) serves as cofactor.

It catalyses the reaction hydrogencarbonate + L-glutamine + 2 ATP + H2O = carbamoyl phosphate + L-glutamate + 2 ADP + phosphate + 2 H(+). The enzyme catalyses hydrogencarbonate + NH4(+) + 2 ATP = carbamoyl phosphate + 2 ADP + phosphate + 2 H(+). Its pathway is amino-acid biosynthesis; L-arginine biosynthesis; carbamoyl phosphate from bicarbonate: step 1/1. It functions in the pathway pyrimidine metabolism; UMP biosynthesis via de novo pathway; (S)-dihydroorotate from bicarbonate: step 1/3. In terms of biological role, large subunit of the glutamine-dependent carbamoyl phosphate synthetase (CPSase). CPSase catalyzes the formation of carbamoyl phosphate from the ammonia moiety of glutamine, carbonate, and phosphate donated by ATP, constituting the first step of 2 biosynthetic pathways, one leading to arginine and/or urea and the other to pyrimidine nucleotides. The large subunit (synthetase) binds the substrates ammonia (free or transferred from glutamine from the small subunit), hydrogencarbonate and ATP and carries out an ATP-coupled ligase reaction, activating hydrogencarbonate by forming carboxy phosphate which reacts with ammonia to form carbamoyl phosphate. The chain is Carbamoyl phosphate synthase large chain from Methanothrix thermoacetophila (strain DSM 6194 / JCM 14653 / NBRC 101360 / PT) (Methanosaeta thermophila).